The chain runs to 472 residues: 3-isopropylmalate dehydratase large subunit (472 aa).

Positions 347, 407, and 410 each coordinate [4Fe-4S] cluster.

Belongs to the aconitase/IPM isomerase family. LeuC type 1 subfamily. As to quaternary structure, heterodimer of LeuC and LeuD. [4Fe-4S] cluster is required as a cofactor.

It carries out the reaction (2R,3S)-3-isopropylmalate = (2S)-2-isopropylmalate. It functions in the pathway amino-acid biosynthesis; L-leucine biosynthesis; L-leucine from 3-methyl-2-oxobutanoate: step 2/4. Catalyzes the isomerization between 2-isopropylmalate and 3-isopropylmalate, via the formation of 2-isopropylmaleate. The protein is 3-isopropylmalate dehydratase large subunit of Parasynechococcus marenigrum (strain WH8102).